A 185-amino-acid chain; its full sequence is Elongation factor P (185 aa).

The protein belongs to the elongation factor P family.

The protein resides in the cytoplasm. The protein operates within protein biosynthesis; polypeptide chain elongation. Functionally, involved in peptide bond synthesis. Stimulates efficient translation and peptide-bond synthesis on native or reconstituted 70S ribosomes in vitro. Probably functions indirectly by altering the affinity of the ribosome for aminoacyl-tRNA, thus increasing their reactivity as acceptors for peptidyl transferase. This Geobacillus sp. (strain WCH70) protein is Elongation factor P.